A 234-amino-acid chain; its full sequence is Biosynthetic peptidoglycan transglycosylase (234 aa).

A helical transmembrane segment spans residues 11–31 (RFLLFAMLGFVGLSVLLVLVF).

The protein belongs to the glycosyltransferase 51 family.

It localises to the cell inner membrane. The enzyme catalyses [GlcNAc-(1-&gt;4)-Mur2Ac(oyl-L-Ala-gamma-D-Glu-L-Lys-D-Ala-D-Ala)](n)-di-trans,octa-cis-undecaprenyl diphosphate + beta-D-GlcNAc-(1-&gt;4)-Mur2Ac(oyl-L-Ala-gamma-D-Glu-L-Lys-D-Ala-D-Ala)-di-trans,octa-cis-undecaprenyl diphosphate = [GlcNAc-(1-&gt;4)-Mur2Ac(oyl-L-Ala-gamma-D-Glu-L-Lys-D-Ala-D-Ala)](n+1)-di-trans,octa-cis-undecaprenyl diphosphate + di-trans,octa-cis-undecaprenyl diphosphate + H(+). It functions in the pathway cell wall biogenesis; peptidoglycan biosynthesis. Peptidoglycan polymerase that catalyzes glycan chain elongation from lipid-linked precursors. This Chromohalobacter salexigens (strain ATCC BAA-138 / DSM 3043 / CIP 106854 / NCIMB 13768 / 1H11) protein is Biosynthetic peptidoglycan transglycosylase.